The chain runs to 425 residues: Monoacylglycerol lipase ABHD2 (425 aa).

The Cytoplasmic segment spans residues 1-9 (MNAMLETPE). A helical; Signal-anchor for type II membrane protein membrane pass occupies residues 10–30 (LPAVFDGVKLAAVAAVLYVIV). Residues 31-425 (RCLNLKSPTA…DTEQMEAELE (395 aa)) are Extracellular-facing. The 255-residue stretch at 128-382 (MVICPGIANH…HGGHLGFFEG (255 aa)) folds into the AB hydrolase-1 domain. Residue Asn136 is glycosylated (N-linked (GlcNAc...) asparagine). Ser207 functions as the Nucleophile in the catalytic mechanism. Active-site charge relay system residues include Asp345 and His376. N-linked (GlcNAc...) asparagine glycosylation is present at Asn410.

This sequence belongs to the AB hydrolase superfamily. AB hydrolase 4 family. As to expression, widely expressed with higher expression in testis. Expressed by vascular smooth muscle cells, non vascular smooth muscle cells and heart.

The protein resides in the cell membrane. It localises to the cytoplasmic vesicle. It is found in the secretory vesicle. The protein localises to the acrosome membrane. It carries out the reaction Hydrolyzes glycerol monoesters of long-chain fatty acids.. The catalysed reaction is an acetyl ester + H2O = an aliphatic alcohol + acetate + H(+). It catalyses the reaction a triacylglycerol + H2O = a diacylglycerol + a fatty acid + H(+). The enzyme catalyses 2-(5Z,8Z,11Z,14Z-eicosatetraenoyl)-glycerol + H2O = glycerol + (5Z,8Z,11Z,14Z)-eicosatetraenoate + H(+). It carries out the reaction a butanoate ester + H2O = an aliphatic alcohol + butanoate + H(+). The catalysed reaction is hexadecanoate ester + H2O = an aliphatic alcohol + hexadecanoate + H(+). Its activity is regulated as follows. Acylglycerol lipase activity is activated upon binding to progesterone. Functionally, progesterone-dependent acylglycerol lipase that catalyzes hydrolysis of endocannabinoid arachidonoylglycerol (AG) from cell membrane. Acts as a progesterone receptor: progesterone-binding activates the acylglycerol lipase activity, mediating degradation of 1-arachidonoylglycerol (1AG) and 2-arachidonoylglycerol (2AG) to glycerol and arachidonic acid (AA). Also displays an ester hydrolase activity against acetyl ester, butanoate ester and hexadecanoate ester. Plays a key role in sperm capacitation in response to progesterone by mediating degradation of 2AG, an inhibitor of the sperm calcium channel CatSper, leading to calcium influx via CatSper and sperm activation. Involved in acrosomal reaction. May also play a role in smooth muscle cells migration. This Mus musculus (Mouse) protein is Monoacylglycerol lipase ABHD2 (Abhd2).